Here is a 1863-residue protein sequence, read N- to C-terminus: MMAASLLRRDKKSTAAHLKADLKRTDNSSGLRQLQELLDSVLNPERGSDPEALDWCKWLLAGGDGFDEFCRTVRSYDNATLCGLVWTANFVAYRCRTCGISPCMSLCAECFNNGDHTGHDFNMFRSQAGGACDCGDGNVMRESGFCNRHRLKTGENVPSVPRDLLLMSEMVLPRFIITIIQYLRDGYTEPESAADRDLQKVLQQLDPHISFLEELTKMGGAMRTVLTKILTDQQTFKELSMGQEDNVYAKKNYEKYLSALKSSGLVSVEEKGAAGGAGDGTSDAAAGAGALSLLGATATASLDDSSKEEDQDGLQGVGQRKRVKLSSSTKDPSIMDTLKHKCFLEELLFWTIKYEFPQKMVTFLLNMLPDQDYKITFTKTFVQHYAFIMKTLMKSHESDTMSNRIVHISVQLFSNEELARHVTEECQLLDIMVTVLLYMMESCLIKSELQDEENNRHVVVNCGEALLKNNTYWPLVSDFINILSHQSVAKRFLEDHSLLLLWMSFVSFFQGMNLNKRELNEHVEFESQTYYAAFAAELEACAQPMWGLLTHCKVKETQDYTKTVVRYCLETLQMWFDAIGFVDEPSLNQLTFHLPLHRYYAMFLSKGVKCQGLDLDSLLPDQEMLMKIMVHPLQIQASLSEIHSNMWVRNGLQIKGQAMTYVQSHFCNSMIDPDIYLLQVCASRLDPDYFISSVFERFKVVDLLTMASQHQNAVLDSEQERPMLEGALTFLVILCSLRIHLGMSDDEILRAEMVSQLCMNDRTHSSLLDLIPENPNPKSGVVPGSCSFEEMLSGVADFKAPVFEPGGSMQQGMYTPKAEVWEKEFDPIMVILRTVYRRDVQSAMDRYSAFLKQSGVHTGNPWPPYKERTPLHPCYKGLVRLLHCKTLHIVIFTLLYKIWMDHQNMSEHVLCMVLYLIELGLDNQVQDDKVEEEPCIEEHCHDSWFPGTSLLSNLHHVINFVRVRVPETAPEVERKRERERERETPPSTSSESATFGQNLREAQVFSLVAERRRKFQEIINRSNHEASQAVRPKSSASRWLPPGTPPQLVTEILEIRESMLSLLVKLHQKLSAKQNSLSLSWLAEVDPAHHAHGDGLTAIERILAKASARSRHSKRCLQEICGKVCPPIPPKKISPGDKKSMDKEERRQRARERQQKLLAEFASRQKSFMETAMDVESPEADAVMDVSSEESLDSEVLYDCVICGQSGPSTEDRPTGLVVLLQASSVLGHRCRSDMPKRLPTTDEEHIYPEDTCGATHDVRLSLMQRYFKDSSCLQSVSIGWDGGVYVQTCGHTLHIDCHKSYMESLRNDQVLQGISVDKGEFTCPLCRQFANSVLPCRPGRGMETGAWHAPSTKSMSTLVKEVEDLQEQLGIFPVRASIKQRDPILIESNLSKEMESVIKDIKNTTQKKYMDYGKNPGSPDNDFLFMYSVARTNLELELVHRGGNLCSGGASAAAKRSCLNQLFHVLAMHMRLYSIDSAYNPWTRLTLSTQSRENEYCDEERPEVPMLFRDVPSLLIIFILTMPQPLRKEHFTCVVKVLYSLQFTQALAALSIRFSREERLAWSNTGAAKKNLPNSDKSWESLLGHMISELTKAKDVYDTNSEETSALSSSVWSPQSIEFRLQQFCLPFLRLSCLLQHHLYGDSLPGCLVEEEFSLLTRCLGLAASVQCSGSMSSAACLEWNISAFDLISQWCSEVVALSDTPSQQSASLLGQDPQWAAPRLLQLPDNYNTIFQYYHRKSCSSCGKTPKDPALCLVCGAFVCLKGHCCKQQGVCECVLHSQHCGAATGIFLLINASVIIIIRGHRFCLWGSVYLDAHGEEDRDLRRGKPLYLCEERYRVLEQQWVAHTFDHINKRWGPHYNGL.

The UBR-type zinc finger occupies 80-151 (TLCGLVWTAN…ESGFCNRHRL (72 aa)). Disordered stretches follow at residues 302 to 330 (LDDSSKEEDQDGLQGVGQRKRVKLSSSTK), 970 to 995 (PEVERKRERERERETPPSTSSESATF), and 1128 to 1152 (IPPKKISPGDKKSMDKEERRQRARE). Composition is skewed to basic and acidic residues over residues 971-984 (EVERKRERERERET) and 1134-1152 (SPGDKKSMDKEERRQRARE). The RING-type; degenerate zinc-finger motif lies at 1270-1328 (DSSCLQSVSIGWDGGVYVQTCGHTLHIDCHKSYMESLRNDQVLQGISVDKGEFTCPLCR).

This sequence belongs to the E3 ubiquitin-protein ligase UBR1-like family.

It carries out the reaction S-ubiquitinyl-[E2 ubiquitin-conjugating enzyme]-L-cysteine + [acceptor protein]-L-lysine = [E2 ubiquitin-conjugating enzyme]-L-cysteine + N(6)-ubiquitinyl-[acceptor protein]-L-lysine.. Its pathway is protein modification; protein ubiquitination. Its function is as follows. E3 ubiquitin-protein ligase which is a component of the N-end rule pathway. Recognizes and binds to proteins bearing specific N-terminal residues, leading to their ubiquitination and subsequent degradation. Positively regulates hedgehog/shh-signaling pathways that function in eye development, neuronal specification and somite development. Activation of shh up-regulates transcription of ubr3, which in turn promotes hedgehog/shh signaling possibly by controlling negative regulators such as Kif7. The sequence is that of E3 ubiquitin-protein ligase ubr3 from Danio rerio (Zebrafish).